Reading from the N-terminus, the 79-residue chain is Conotoxin Vi6.9 (79 aa).

Positions 1 to 22 (MKLTCMVIITVLFLTASQLITA) are cleaved as a signal peptide. A propeptide spanning residues 23–47 (DYSRDQRQYRAVRLGDEMRNFKGAR) is cleaved from the precursor. 3 disulfide bridges follow: C49–C62, C56–C67, and C61–C77. 4-hydroxyproline is present on residues P60 and P63.

Belongs to the conotoxin O1 superfamily. Expressed by the venom duct.

The protein resides in the secreted. Ion channel inhibitor that inhibits the increase in intracellular calcium upon depolarization in DRG neurons. In vivo, both intraperitoneal and intracranial injections into mice induce hyperactivity. This chain is Conotoxin Vi6.9, found in Conus virgo (Virgin cone).